A 690-amino-acid chain; its full sequence is Elongation factor G (690 aa).

The region spanning 8–282 (KMTRNIGIMA…AVIDYLPSPL (275 aa)) is the tr-type G domain. GTP contacts are provided by residues 17-24 (AHIDAGKT), 81-85 (DTPGH), and 135-138 (NKMD).

It belongs to the TRAFAC class translation factor GTPase superfamily. Classic translation factor GTPase family. EF-G/EF-2 subfamily.

The protein resides in the cytoplasm. Catalyzes the GTP-dependent ribosomal translocation step during translation elongation. During this step, the ribosome changes from the pre-translocational (PRE) to the post-translocational (POST) state as the newly formed A-site-bound peptidyl-tRNA and P-site-bound deacylated tRNA move to the P and E sites, respectively. Catalyzes the coordinated movement of the two tRNA molecules, the mRNA and conformational changes in the ribosome. This Acholeplasma laidlawii (strain PG-8A) protein is Elongation factor G.